Reading from the N-terminus, the 134-residue chain is Small ribosomal subunit protein uS11 (134 aa).

It belongs to the universal ribosomal protein uS11 family. Part of the 30S ribosomal subunit. Interacts with proteins S7 and S18. Binds to IF-3.

Functionally, located on the platform of the 30S subunit, it bridges several disparate RNA helices of the 16S rRNA. Forms part of the Shine-Dalgarno cleft in the 70S ribosome. This chain is Small ribosomal subunit protein uS11, found in Corynebacterium diphtheriae (strain ATCC 700971 / NCTC 13129 / Biotype gravis).